Here is a 313-residue protein sequence, read N- to C-terminus: Ribosomal RNA small subunit methyltransferase H (313 aa).

S-adenosyl-L-methionine contacts are provided by residues 34–36, Asp-53, Phe-80, Asp-101, and Gln-108; that span reads GGH.

The protein belongs to the methyltransferase superfamily. RsmH family.

It localises to the cytoplasm. It carries out the reaction cytidine(1402) in 16S rRNA + S-adenosyl-L-methionine = N(4)-methylcytidine(1402) in 16S rRNA + S-adenosyl-L-homocysteine + H(+). In terms of biological role, specifically methylates the N4 position of cytidine in position 1402 (C1402) of 16S rRNA. In Lacticaseibacillus casei (strain BL23) (Lactobacillus casei), this protein is Ribosomal RNA small subunit methyltransferase H.